The sequence spans 463 residues: Adenosylhomocysteinase (463 aa).

3 residues coordinate substrate: Thr54, Asp128, and Glu189. NAD(+) is bound at residue 190-192; it reads TTT. Residues Lys219 and Asp223 each contribute to the substrate site. NAD(+)-binding positions include Asn224, 253–258, Glu276, Asn311, 332–334, and Asn377; these read GYGDVG and IGH.

It belongs to the adenosylhomocysteinase family. In terms of assembly, homotetramer. The cofactor is NAD(+).

The protein resides in the cytoplasm. It catalyses the reaction S-adenosyl-L-homocysteine + H2O = L-homocysteine + adenosine. The protein operates within amino-acid biosynthesis; L-homocysteine biosynthesis; L-homocysteine from S-adenosyl-L-homocysteine: step 1/1. Its function is as follows. May play a key role in the regulation of the intracellular concentration of adenosylhomocysteine. This chain is Adenosylhomocysteinase, found in Rhodobacter capsulatus (strain ATCC BAA-309 / NBRC 16581 / SB1003).